Consider the following 368-residue polypeptide: MRGPALLLALRALCALSALRGTARAVNNSGRWWGIINVASSTNLLTDSGSVQLVLEPGLQLLSRKQRRLIRQNPGILHSVSAGLQSAVRECQWQFRNRRWNCPTSQGPNIFGKIVNRGCRETAFIFAITSAGVTHSVARSCSEGSIESCTCDYRRRGPGGPDWHWGGCSDNIDFGRLFGREFVDSSEKGRDLRFLMNLHNNEAGRMTVFSEMRQECKCHGMSGSCTVRTCWMRLPTFRAVGDVLKDRFDGASRVIYGNKGSNRASRVELHHLEPENPAHKPPSPHDLVYFEKSPNFCTYSGKMGTAGTAGRACNSSSPGLDGCELLCCGRGFRTRTQRVTERCNCTFHWCCHVSCLNCTNTQVLHECL.

A signal peptide spans 1–25 (MRGPALLLALRALCALSALRGTARA). 11 cysteine pairs are disulfide-bonded: C91/C102, C141/C149, C151/C168, C216/C230, C218/C225, C297/C328, C313/C323, C327/C367, C343/C358, C345/C355, and C350/C351. A lipid anchor (O-palmitoleoyl serine; by PORCN) is attached at S222.

It belongs to the Wnt family. Forms a soluble 1:1 complex with AFM; this prevents oligomerization and is required for prolonged biological activity. The complex with AFM may represent the physiological form in body fluids. Interacts with PORCN. Post-translationally, N-glycosylated. N-glycosylation favors subsequent palmitoleoylation. Palmitoleoylation is required for efficient binding to frizzled receptors. Palmitoleoylation is necessary for proper trafficking to cell surface. Depalmitoleoylated by NOTUM, leading to inhibit Wnt signaling pathway.

It is found in the secreted. Its subcellular location is the extracellular space. The protein localises to the extracellular matrix. In terms of biological role, ligand for members of the frizzled family of seven transmembrane receptors. Acts in the canonical Wnt signaling pathway by promoting beta-catenin-dependent transcriptional activation. Developmental protein that promotes cell proliferation in the developing spinal cord. Has a role in osteoblast function, bone development and bone homeostasis. This chain is Protein Wnt-1 (WNT1), found in Gallus gallus (Chicken).